Here is a 387-residue protein sequence, read N- to C-terminus: Phosphoglycerate kinase (387 aa).

Substrate is bound by residues 21–23 (DLN), Arg-36, 59–62 (HLGR), Arg-113, and Arg-146. ATP-binding positions include Lys-197, Glu-314, and 340 to 343 (GGDT).

This sequence belongs to the phosphoglycerate kinase family. As to quaternary structure, monomer.

The protein resides in the cytoplasm. It catalyses the reaction (2R)-3-phosphoglycerate + ATP = (2R)-3-phospho-glyceroyl phosphate + ADP. It participates in carbohydrate degradation; glycolysis; pyruvate from D-glyceraldehyde 3-phosphate: step 2/5. The protein is Phosphoglycerate kinase (pgk) of Vibrio cholerae serotype O1 (strain ATCC 39541 / Classical Ogawa 395 / O395).